The primary structure comprises 217 residues: Phosphatidylserine decarboxylase proenzyme (217 aa).

Ser-187 serves as the catalytic Schiff-base intermediate with substrate; via pyruvic acid. The residue at position 187 (Ser-187) is a Pyruvic acid (Ser); by autocatalysis.

Belongs to the phosphatidylserine decarboxylase family. PSD-A subfamily. In terms of assembly, heterodimer of a large membrane-associated beta subunit and a small pyruvoyl-containing alpha subunit. Pyruvate is required as a cofactor. Post-translationally, is synthesized initially as an inactive proenzyme. Formation of the active enzyme involves a self-maturation process in which the active site pyruvoyl group is generated from an internal serine residue via an autocatalytic post-translational modification. Two non-identical subunits are generated from the proenzyme in this reaction, and the pyruvate is formed at the N-terminus of the alpha chain, which is derived from the carboxyl end of the proenzyme. The post-translation cleavage follows an unusual pathway, termed non-hydrolytic serinolysis, in which the side chain hydroxyl group of the serine supplies its oxygen atom to form the C-terminus of the beta chain, while the remainder of the serine residue undergoes an oxidative deamination to produce ammonia and the pyruvoyl prosthetic group on the alpha chain.

Its subcellular location is the cell membrane. It catalyses the reaction a 1,2-diacyl-sn-glycero-3-phospho-L-serine + H(+) = a 1,2-diacyl-sn-glycero-3-phosphoethanolamine + CO2. It functions in the pathway phospholipid metabolism; phosphatidylethanolamine biosynthesis; phosphatidylethanolamine from CDP-diacylglycerol: step 2/2. Catalyzes the formation of phosphatidylethanolamine (PtdEtn) from phosphatidylserine (PtdSer). The sequence is that of Phosphatidylserine decarboxylase proenzyme from Thermobifida fusca (strain YX).